Reading from the N-terminus, the 412-residue chain is Isocitrate dehydrogenase [NADP] cytoplasmic (412 aa).

Residues 76-78 (TIT) and Arg83 each bind NADP(+). Thr78 serves as a coordination point for substrate. Substrate-binding positions include 95-101 (SPNGTIR), Arg110, and Arg133. Asp253 serves as a coordination point for Mn(2+). Lys261 provides a ligand contact to NADP(+). Position 276 (Asp276) interacts with Mn(2+). NADP(+) is bound by residues 309 to 314 (GTVTRH) and Asn327.

The protein belongs to the isocitrate and isopropylmalate dehydrogenases family. In terms of assembly, homodimer. Requires Mg(2+) as cofactor. Mn(2+) serves as cofactor.

Its subcellular location is the cytoplasm. The catalysed reaction is D-threo-isocitrate + NADP(+) = 2-oxoglutarate + CO2 + NADPH. The chain is Isocitrate dehydrogenase [NADP] cytoplasmic (idhC) from Dictyostelium discoideum (Social amoeba).